The primary structure comprises 187 residues: UPF0340 protein SGO_0411 (187 aa).

Belongs to the UPF0340 family.

In Streptococcus gordonii (strain Challis / ATCC 35105 / BCRC 15272 / CH1 / DL1 / V288), this protein is UPF0340 protein SGO_0411.